Consider the following 2718-residue polypeptide: Zinc finger protein 40 (2718 aa).

3 disordered regions span residues 58–182, 210–256, and 335–373; these read HLKK…CISS, LSQK…AESQ, and GLTS…PMPI. Ser141 carries the post-translational modification Phosphoserine. The span at 142–158 shows a compositional bias: basic and acidic residues; it reads ELRRWRSEGADPAKFSD. 2 stretches are compositionally biased toward polar residues: residues 164–182 and 237–256; these read DSSS…CISS and KNSS…AESQ. The C2H2-type 1 zinc-finger motif lies at 406–428; sequence YICEYCNRACAKPSVLLKHIRSH. A Phosphothreonine modification is found at Thr429. A C2H2-type 2 zinc finger spans residues 434–456; it reads YPCVTCGFSFKTKSNLYKHKKSH. A phosphoserine mark is found at Ser476, Ser479, Ser492, Ser495, Ser571, and Ser577. The tract at residues 484-511 is disordered; it reads SIHSDVEDSGESEEEGATDERQHDLGAM. The span at 490-500 shows a compositional bias: acidic residues; that stretch reads EDSGESEEEGA. Residues 574 to 727 form a disordered region; that stretch reads RTDSPKAMDP…TPSALPTGEK (154 aa). The span at 576–585 shows a compositional bias: basic and acidic residues; sequence DSPKAMDPKP. Positions 588–612 are enriched in polar residues; sequence SSAQKQKDLQVTNVQPLSANMSQGG. The segment covering 617–626 has biased composition (basic and acidic residues); sequence ETNENSHQKG. 2 stretches are compositionally biased toward polar residues: residues 644–687 and 698–721; these read AQLQ…QTVS and STEQ…TPSA. Ser670 and Ser681 each carry phosphoserine. The segment at 956-986 adopts a CCHC HIVEP-type zinc-finger fold; it reads GTMFECETCRNRYRKLENFENHKKFYCSELH. A disordered region spans residues 1022-1062; that stretch reads WEQTPQIRKRRKMKSVGDDEELQQNESGTSPKSSEGLQFQN. Phosphoserine occurs at positions 1036, 1051, 1091, 1158, 1161, and 1180. Residues 1045 to 1062 are compositionally biased toward polar residues; the sequence is QNESGTSPKSSEGLQFQN. The interval 1138 to 1169 is disordered; the sequence is HTNSLSRPNSFDKPEPFERASPVSFQELNRTG. Positions 1160–1169 are enriched in polar residues; the sequence is VSFQELNRTG. Composition is skewed to basic and acidic residues over residues 1202-1219 and 1246-1259; these read LRGE…ERHV and DLEA…KSEK. Disordered regions lie at residues 1202–1282, 1384–1414, and 1523–1548; these read LRGE…PKKK, RSKS…SRVG, and SHQS…VLSG. Thr1268 is modified (phosphothreonine). Composition is skewed to low complexity over residues 1394 to 1406 and 1523 to 1536; these read TPPQ…ELQP and SHQS…VSTQ. Residues Ser1735, Ser1740, Ser1749, and Ser1753 each carry the phosphoserine modification. Residues 1871 to 1883 are compositionally biased toward polar residues; sequence VRSSPAPSENTHI. The interval 1871 to 1911 is disordered; that stretch reads VRSSPAPSENTHISPLKCTDNNQERKSPGVKNQGDKVNIQE. Residues Ser1884 and Ser2033 each carry the phosphoserine modification. C2H2-type zinc fingers lie at residues 2088–2110 and 2116–2140; these read YICE…IRTH and YHCT…SKAH. 4 disordered regions span residues 2155–2228, 2265–2303, 2327–2381, and 2572–2718; these read DEQD…PVST, SDYN…HQMS, SPSS…THLF, and PASQ…VIAT. The span at 2164-2175 shows a compositional bias: basic and acidic residues; it reads EKQRFSYERSGY. Positions 2176–2198 are enriched in acidic residues; sequence DLEESDGPDEDDNENEDDDEDSQ. 2 stretches are compositionally biased toward polar residues: residues 2199 to 2226 and 2288 to 2300; these read AESV…QDPV and TIPS…SPCH. Phosphoserine occurs at positions 2327 and 2599. A compositionally biased stretch (polar residues) spans 2573–2608; the sequence is ASQSKACETQPKQTSVASANQVSRTESPQGLPTVQR. Residues 2623–2637 show a composition bias toward basic and acidic residues; that stretch reads DHARLDGLSKMDTEK. Polar residues predominate over residues 2651-2663; the sequence is TSIQGQPASTSQP. Phosphoserine occurs at positions 2669 and 2682.

In terms of assembly, interacts with UTP4.

It is found in the nucleus. The protein localises to the cytoplasm. Functionally, this protein specifically binds to the DNA sequence 5'-GGGACTTTCC-3' which is found in the enhancer elements of numerous viral promoters such as those of SV40, CMV, or HIV-1. In addition, related sequences are found in the enhancer elements of a number of cellular promoters, including those of the class I MHC, interleukin-2 receptor, and interferon-beta genes. It may act in T-cell activation. Involved in activating HIV-1 gene expression. Isoform 2 and isoform 3 also bind to the IPCS (IRF1 and p53 common sequence) DNA sequence in the promoter region of interferon regulatory factor 1 and p53 genes and are involved in transcription regulation of these genes. Isoform 2 does not activate HIV-1 gene expression. Isoform 2 and isoform 3 may be involved in apoptosis. This Homo sapiens (Human) protein is Zinc finger protein 40 (HIVEP1).